The following is a 334-amino-acid chain: NAD-dependent protein deacylase sirtuin-6 (334 aa).

Ser2 carries the N-acetylserine modification. The residue at position 10 (Ser10) is a Phosphoserine. The region spanning 27 to 272 (PEELERKVWE…CRLMKHLGLE (246 aa)) is the Deacetylase sirtuin-type domain. Residue Lys33 is modified to N6-acetyllysine. 7 residues coordinate NAD(+): Ala53, Thr57, Phe64, Arg65, Trp71, Gln113, and His133. The Proton acceptor role is filled by His133. Zn(2+)-binding residues include Cys141, Cys144, and Cys166. Residue Lys170 forms a Glycyl lysine isopeptide (Lys-Gly) (interchain with G-Cter in ubiquitin) linkage. Position 177 (Cys177) interacts with Zn(2+). 5 residues coordinate NAD(+): Gly214, Ser216, Asn240, Gln242, and Val258. A disordered region spans residues 312-334 (KSKPNSPILHRPPKRVKTEAAPS).

It belongs to the sirtuin family. Class IV subfamily. In terms of assembly, homodimer; binds to nucleosomes and DNA ends as a homodimer. Interacts with RELA; interferes with RELA binding to target DNA. Interacts with SMARCA5; promoting recruitment of SMARCA5/SNF2H to double-strand breaks (DSBs) sites. Interacts with the mTORC2 complex; preventing the ability of SIRT6 to deacetylate FOXO1. Interacts with the CLOCK-BMAL1 complex; recruited by the CLOCK-BMAL1 complex to regulate expression of clock-controlled genes. Interacts with CSNK2A2; preventing CSNK2A2 localization to the nucleus. The cofactor is Zn(2+). In terms of processing, acetylated at Lys-33. Deacetylation at Lys-33 by SIRT1 promotes homomultimerization and binding to double-strand breaks (DSBs) sites. Phosphorylation at Ser-10 by MAPK8/JNK1 in response to oxidative stress stimulates the mono-ADP-ribosyltransferase activity on PARP1, leading to PARP1 recruitment to double-strand breaks (DSBs). Post-translationally, monoubiquitinated at Lys-170 by STUB1/CHIP, preventing its degradation by the proteasome. In terms of processing, sumoylated, leading to specifically decrease ability to deacetylate histone H3 at 'Lys-56' (H3K56ac). In terms of tissue distribution, highest levels are found in muscle, thymus, spleen, brain and heart (at protein level).

The protein localises to the nucleus. The protein resides in the chromosome. It localises to the telomere. Its subcellular location is the endoplasmic reticulum. The enzyme catalyses N(6)-acetyl-L-lysyl-[protein] + NAD(+) + H2O = 2''-O-acetyl-ADP-D-ribose + nicotinamide + L-lysyl-[protein]. It carries out the reaction N(6)-tetradecanoyl-L-lysyl-[protein] + NAD(+) + H2O = 2''-O-tetradecanoyl-ADP-D-ribose + nicotinamide + L-lysyl-[protein]. The catalysed reaction is N(6)-hexadecanoyl-L-lysyl-[protein] + NAD(+) + H2O = 2''-O-hexadecanoyl-ADP-D-ribose + nicotinamide + L-lysyl-[protein]. It catalyses the reaction L-lysyl-[protein] + NAD(+) = N(6)-(ADP-D-ribosyl)-L-lysyl-[protein] + nicotinamide + H(+). The enzyme catalyses L-arginyl-[protein] + NAD(+) = N(omega)-(ADP-D-ribosyl)-L-arginyl-[protein] + nicotinamide + H(+). With respect to regulation, compared to the defatty-acylase activity, the protein deacetylase activity is weak in vitro, and requires activation. The histone deacetylase activity is strongly activated upon binding to nucleosomes and chromatin in vivo. Two molecules of SIRT6 associate with the acidic patch of one nucleosome, while the C-terminal disordered region of SIRT6 associates with nucleosomal DNA, leading to efficient histone deacetylation. The protein-lysine deacetylase activity is also activated by long-chain free fatty-acids. In terms of biological role, NAD-dependent protein deacetylase, deacylase and mono-ADP-ribosyltransferase that plays an essential role in DNA damage repair, telomere maintenance, metabolic homeostasis, inflammation, tumorigenesis and aging. Displays protein-lysine deacetylase or defatty-acylase (demyristoylase and depalmitoylase) activity, depending on the context. Acts as a key histone deacetylase by catalyzing deacetylation of histone H3 at 'Lys-9', 'Lys-18' and 'Lys-56' (H3K9ac, H3K18ac and H3K56ac, respectively), suppressing target gene expression of several transcription factors, including NF-kappa-B. Acts as an inhibitor of transcription elongation by mediating deacetylation of H3K9ac and H3K56ac, preventing release of NELFE from chromatin and causing transcriptional pausing. Involved in DNA repair by promoting double-strand break (DSB) repair: acts as a DSB sensor by recognizing and binding DSB sites, leading to (1) recruitment of DNA repair proteins, such as SMARCA5/SNF2H, and (2) deacetylation of histone H3K9ac and H3K56ac. SIRT6 participation to DSB repair is probably involved in extension of life span. Also promotes DNA repair by deacetylating non-histone proteins, such as DDB2 and p53/TP53. Specifically deacetylates H3K18ac at pericentric heterochromatin, thereby maintaining pericentric heterochromatin silencing at centromeres and protecting against genomic instability and cellular senescence. Involved in telomere maintenance by catalyzing deacetylation of histone H3 in telomeric chromatin, regulating telomere position effect and telomere movement in response to DNA damage. Required for embryonic stem cell differentiation by mediating histone deacetylation of H3K9ac. Plays a major role in metabolism by regulating processes such as glycolysis, gluconeogenesis, insulin secretion and lipid metabolism. Inhibits glycolysis via histone deacetylase activity and by acting as a corepressor of the transcription factor HIF1A, thereby controlling the expression of multiple glycolytic genes. Has tumor suppressor activity by repressing glycolysis, thereby inhibiting the Warburg effect. Also regulates glycolysis and tumorigenesis by mediating deacetylation and nuclear export of non-histone proteins, such as isoform M2 of PKM (PKM2). Acts as a negative regulator of gluconeogenesis by mediating deacetylation of non-histone proteins, such as FOXO1 and KAT2A/GCN5. Promotes beta-oxidation of fatty acids during fasting by catalyzing deacetylation of NCOA2, inducing coactivation of PPARA. Acts as a regulator of lipid catabolism in brown adipocytes, both by catalyzing deacetylation of histones and non-histone proteins, such as FOXO1. Also acts as a regulator of circadian rhythms, both by regulating expression of clock-controlled genes involved in lipid and carbohydrate metabolism, and by catalyzing deacetylation of PER2. The defatty-acylase activity is specifically involved in regulation of protein secretion. Has high activity toward long-chain fatty acyl groups and mediates protein-lysine demyristoylation and depalmitoylation of target proteins, such as RRAS2 and TNF, thereby regulating their secretion. Also acts as a mono-ADP-ribosyltransferase by mediating mono-ADP-ribosylation of PARP1, TRIM28/KAP1 or SMARCC2/BAF170. Mono-ADP-ribosyltransferase activity is involved in DNA repair, cellular senescence, repression of LINE-1 retrotransposon elements and regulation of transcription. In Mus musculus (Mouse), this protein is NAD-dependent protein deacylase sirtuin-6.